We begin with the raw amino-acid sequence, 64 residues long: Large ribosomal subunit protein bL35 (64 aa).

It belongs to the bacterial ribosomal protein bL35 family.

In Ectopseudomonas mendocina (strain ymp) (Pseudomonas mendocina), this protein is Large ribosomal subunit protein bL35.